A 360-amino-acid chain; its full sequence is MLVWLAEHLAKLYTGFNVFSYLTFRAIVSLLTALVISLWMGPHMIAWLQRLQIGQVVRNEGPESHFSKRGTPTMGGVMILVAIIVSVLMWANLSNPYVWCVLLVLAGYGAVGFVDDYRKVVRKDTKGLIARWKYFWQSVIALVVAFTMYSIGKDTPATQLVVPFFKDVMPQLGLLYVALAYFVIVGTSNAVNLTDGLDGLAIMPTVFVAAGFALVAWATGNMNFAGYLHIPYIRHASELVIVCTAIVGAGLGFLWFNTYPAQVFMGDVGSLALGGALGTIAVLLRQEFLLVIMGGVFVVETLSVILQVGSFKLRGQRIFRMAPIHHHYELKGWPEPRVIVRFWIISLMLVLIGLATLKVR.

The next 10 membrane-spanning stretches (helical) occupy residues 27-47 (IVSL…MIAW), 73-93 (TMGG…WANL), 94-114 (SNPY…VGFV), 132-152 (WKYF…YSIG), 168-188 (VMPQ…VGTS), 199-219 (GLAI…AWAT), 236-256 (ASEL…FLWF), 263-283 (VFMG…IAVL), 288-308 (FLLV…ILQV), and 338-358 (VIVR…ATLK).

Belongs to the glycosyltransferase 4 family. MraY subfamily. The cofactor is Mg(2+).

Its subcellular location is the cell inner membrane. It carries out the reaction UDP-N-acetyl-alpha-D-muramoyl-L-alanyl-gamma-D-glutamyl-meso-2,6-diaminopimeloyl-D-alanyl-D-alanine + di-trans,octa-cis-undecaprenyl phosphate = di-trans,octa-cis-undecaprenyl diphospho-N-acetyl-alpha-D-muramoyl-L-alanyl-D-glutamyl-meso-2,6-diaminopimeloyl-D-alanyl-D-alanine + UMP. It functions in the pathway cell wall biogenesis; peptidoglycan biosynthesis. Catalyzes the initial step of the lipid cycle reactions in the biosynthesis of the cell wall peptidoglycan: transfers peptidoglycan precursor phospho-MurNAc-pentapeptide from UDP-MurNAc-pentapeptide onto the lipid carrier undecaprenyl phosphate, yielding undecaprenyl-pyrophosphoryl-MurNAc-pentapeptide, known as lipid I. This chain is Phospho-N-acetylmuramoyl-pentapeptide-transferase, found in Pectobacterium atrosepticum (strain SCRI 1043 / ATCC BAA-672) (Erwinia carotovora subsp. atroseptica).